The sequence spans 356 residues: V-type proton ATPase subunit d (356 aa).

This sequence belongs to the V-ATPase V0D/AC39 subunit family. In terms of assembly, V-ATPase is a heteromultimeric enzyme composed of a peripheral catalytic V1 complex (components A to H) attached to an integral membrane V0 proton pore complex (components: a, c, c', c'' and d).

In terms of biological role, subunit of the integral membrane V0 complex of vacuolar ATPase. Vacuolar ATPase is responsible for acidifying a variety of intracellular compartments in eukaryotic cells, thus providing most of the energy required for transport processes in the vacuolar system. The protein is V-type proton ATPase subunit d (vatD-1) of Dictyostelium discoideum (Social amoeba).